Reading from the N-terminus, the 184-residue chain is MKVIAVTGYKPFELGIFKNDHPGVECIKKALRRKLTAFVEDGLEWVIISGQLGVELWTAEVVFEIQVEYPDLKLAVFTPFLEQEEGWKEDNREYYEFILSQADHVDSITKRKYESPEQFKLKNQFFIEKSDALLAVYDEEKPGSPKYIVEAAKKKGEIENYHSYFILFSDLQDIIEEEQWNNAE.

This sequence belongs to the UPF0398 family.

The polypeptide is UPF0398 protein BCAH820_1652 (Bacillus cereus (strain AH820)).